A 421-amino-acid polypeptide reads, in one-letter code: MLLYYILVALWATVTYAKSFSEDISEMPELSEMSSYLNQTPEAKDVLDQQKNVTLLALENSAFRDFVGQGEGNDNQSSSNSSLLRGIFSYQLVKGLHNSEQITTTPQFSPTELNDAGFTNVSSGQIVQLVEKDGKDYAISGLNDNSTIIKPGVDVENGVIHVIDRPLTLPQSVTATLQAANLTSFQGALQRGNAVSNANDPKDITLFAPRNLGFQRIGTAFENISAEDLGQIANYHIVKGKVLYSPDLTDADHPTYADKDLHISTVDGRSYVNSARVESTNLLVNNGVIHVISDVLNPNNDTAKPVPNADPPPPAFENANPVSTDPLTDGIPSPTSVIPLPGITSGGEGGGGGGGESTAPPSPTATVTETQSGGGGGGGGGAGGGPGPTATNTPQPGAAATERAKAGLAAVVGLGVVLINA.

Residues 1–17 (MLLYYILVALWATVTYA) form the signal peptide. FAS1 domains lie at 18–167 (KSFS…DRPL) and 169–296 (LPQS…SDVL). 8 N-linked (GlcNAc...) asparagine glycosylation sites follow: Asn-52, Asn-75, Asn-80, Asn-120, Asn-145, Asn-181, Asn-223, and Asn-300. The segment at 300-401 (NDTAKPVPNA…NTPQPGAAAT (102 aa)) is disordered. 2 stretches are compositionally biased toward gly residues: residues 344–356 (TSGGEGGGGGGGE) and 372–387 (SGGGGGGGGGAGGGPG). Residues 388–401 (PTATNTPQPGAAAT) show a composition bias toward low complexity. Gly-397 carries GPI-anchor amidated glycine lipidation. Positions 398-421 (AAATERAKAGLAAVVGLGVVLINA) are cleaved as a propeptide — removed in mature form.

Belongs to the fasciclin-like AGP family.

The protein resides in the cell membrane. Functionally, may be a cell surface adhesion protein. The polypeptide is Fasciclin-like arabinogalactan protein ARB_02922 (Arthroderma benhamiae (strain ATCC MYA-4681 / CBS 112371) (Trichophyton mentagrophytes)).